Consider the following 467-residue polypeptide: tRNA modification GTPase MnmE (467 aa).

(6S)-5-formyl-5,6,7,8-tetrahydrofolate is bound by residues R25, E87, and K130. Residues 226 to 389 (GLSVVLAGQP…LRGELLRIAG (164 aa)) enclose the TrmE-type G domain. N236 contacts K(+). Residues 236–241 (NVGKSS), 255–261 (TPIAGTT), and 280–283 (DTAG) contribute to the GTP site. S240 contributes to the Mg(2+) binding site. 3 residues coordinate K(+): T255, I257, and T260. T261 is a Mg(2+) binding site. K467 serves as a coordination point for (6S)-5-formyl-5,6,7,8-tetrahydrofolate.

Belongs to the TRAFAC class TrmE-Era-EngA-EngB-Septin-like GTPase superfamily. TrmE GTPase family. Homodimer. Heterotetramer of two MnmE and two MnmG subunits. K(+) is required as a cofactor.

It localises to the cytoplasm. Its function is as follows. Exhibits a very high intrinsic GTPase hydrolysis rate. Involved in the addition of a carboxymethylaminomethyl (cmnm) group at the wobble position (U34) of certain tRNAs, forming tRNA-cmnm(5)s(2)U34. This Burkholderia thailandensis (strain ATCC 700388 / DSM 13276 / CCUG 48851 / CIP 106301 / E264) protein is tRNA modification GTPase MnmE.